The primary structure comprises 355 residues: Ribosomal RNA small subunit methyltransferase H (355 aa).

S-adenosyl-L-methionine-binding positions include 55–57 (GGH), Asp75, Asp122, and Gln129. Positions 327 to 355 (ERTSQPLPATGAEDFVPAVPGAAEKGRRR) are disordered.

The protein belongs to the methyltransferase superfamily. RsmH family.

The protein resides in the cytoplasm. The enzyme catalyses cytidine(1402) in 16S rRNA + S-adenosyl-L-methionine = N(4)-methylcytidine(1402) in 16S rRNA + S-adenosyl-L-homocysteine + H(+). Functionally, specifically methylates the N4 position of cytidine in position 1402 (C1402) of 16S rRNA. This is Ribosomal RNA small subunit methyltransferase H from Bordetella avium (strain 197N).